A 308-amino-acid chain; its full sequence is MTTGKLIDRFEGPSGRAVLEEVLLEQKLVLGNQDLARRLAEVGTLEEIAKDAVLITEDAEDSEVYFIITGHFQVKVHDREVATRGGGDHVGEMAALVPTAKRSATVLATEPSIVLKVSAADFKSIADAYPSVWRQVTRQLVDRLHQRNDMVLPAHQSSHVFIICSVEALPIARAIENNLEHDKFFVKTWTQGVFRASQYALESLEEQLDECDFAIAIAQPDDSVTMREETKNTPRDNVIFELGLFVGRLGRARTFLLEPRGDEVHLPSDLKGLTTIGYRLTKSEDQLPSSLSPACNQLRTIFNKLGPK.

A nucleoside 3',5'-cyclic phosphate is bound at residue 54–143; sequence LITEDAEDSE…RQVTRQLVDR (90 aa). The interval 160–278 is TIR-like; it reads VFIICSVEAL…DLKGLTTIGY (119 aa).

The protein resides in the cytoplasm. The catalysed reaction is NAD(+) + H2O = ADP-D-ribose + nicotinamide + H(+). Functionally, pycsar (pyrimidine cyclase system for antiphage resistance) provides immunity against bacteriophage. The pyrimidine cyclase (PycC) synthesizes cyclic nucleotides in response to infection; these serve as specific second messenger signals. The signals activate the adjacent effector, leading to bacterial cell death and abortive phage infection. A clade A Pycsar system. In terms of biological role, the effector gene of a two-gene Pycsar system. Expression of this and adjacent uridylate cyclase PaPycC (AC P0DV40) probably confers resistance to bacteriophage. The genes are probably only expressed in response to bacteriophage infection. Probably only responds to cUMP (produced by its cognate NTP cyclase), acts by depleting cellular NAD(+) levels. The chain is Pycsar effector protein PaPycTIR from Pseudomonas aeruginosa.